A 108-amino-acid polypeptide reads, in one-letter code: Histone H4 (108 aa).

The tract at residues 1–36 (MSSAQSRGGKTGGKVGGKVGAKRHKKTQKEHINGIT) is disordered. Over residues 9 to 19 (GKTGGKVGGKV) the composition is skewed to gly residues.

Belongs to the histone H4 family. In terms of assembly, the nucleosome is a histone octamer containing two molecules each of H2A, H2B, H3 and H4 assembled in one H3-H4 heterotetramer and two H2A-H2B heterodimers. The octamer wraps approximately 147 bp of DNA.

The protein localises to the nucleus. It localises to the chromosome. In terms of biological role, core component of nucleosome. Nucleosomes wrap and compact DNA into chromatin, limiting DNA accessibility to the cellular machineries which require DNA as a template. Histones thereby play a central role in transcription regulation, DNA repair, DNA replication and chromosomal stability. DNA accessibility is regulated via a complex set of post-translational modifications of histones, also called histone code, and nucleosome remodeling. The polypeptide is Histone H4 (H4a) (Dictyostelium discoideum (Social amoeba)).